The sequence spans 375 residues: Carbamoyl phosphate synthase small chain (375 aa).

The tract at residues 1–184 is CPSase; that stretch reads MVSLYLENGL…LDYKPFDEKT (184 aa). The L-glutamine site is built by serine 44, glycine 240, and glycine 242. One can recognise a Glutamine amidotransferase type-1 domain in the interval 188 to 375; that stretch reads IIAVLDFGAK…KEFVELLKDF (188 aa). Cysteine 268 acts as the Nucleophile in catalysis. Positions 269, 272, 310, and 313 each coordinate L-glutamine. Active-site residues include histidine 351 and glutamate 353.

This sequence belongs to the CarA family. As to quaternary structure, composed of two chains; the small (or glutamine) chain promotes the hydrolysis of glutamine to ammonia, which is used by the large (or ammonia) chain to synthesize carbamoyl phosphate. Tetramer of heterodimers (alpha,beta)4.

It carries out the reaction hydrogencarbonate + L-glutamine + 2 ATP + H2O = carbamoyl phosphate + L-glutamate + 2 ADP + phosphate + 2 H(+). The enzyme catalyses L-glutamine + H2O = L-glutamate + NH4(+). The protein operates within amino-acid biosynthesis; L-arginine biosynthesis; carbamoyl phosphate from bicarbonate: step 1/1. It functions in the pathway pyrimidine metabolism; UMP biosynthesis via de novo pathway; (S)-dihydroorotate from bicarbonate: step 1/3. Functionally, small subunit of the glutamine-dependent carbamoyl phosphate synthetase (CPSase). CPSase catalyzes the formation of carbamoyl phosphate from the ammonia moiety of glutamine, carbonate, and phosphate donated by ATP, constituting the first step of 2 biosynthetic pathways, one leading to arginine and/or urea and the other to pyrimidine nucleotides. The small subunit (glutamine amidotransferase) binds and cleaves glutamine to supply the large subunit with the substrate ammonia. The protein is Carbamoyl phosphate synthase small chain of Helicobacter pylori (strain ATCC 700392 / 26695) (Campylobacter pylori).